The sequence spans 875 residues: Alanine--tRNA ligase (875 aa).

The Zn(2+) site is built by His-563, His-567, Cys-665, and His-669.

The protein belongs to the class-II aminoacyl-tRNA synthetase family. The cofactor is Zn(2+).

Its subcellular location is the cytoplasm. It carries out the reaction tRNA(Ala) + L-alanine + ATP = L-alanyl-tRNA(Ala) + AMP + diphosphate. Its function is as follows. Catalyzes the attachment of alanine to tRNA(Ala) in a two-step reaction: alanine is first activated by ATP to form Ala-AMP and then transferred to the acceptor end of tRNA(Ala). Also edits incorrectly charged Ser-tRNA(Ala) and Gly-tRNA(Ala) via its editing domain. The protein is Alanine--tRNA ligase of Desulfitobacterium hafniense (strain Y51).